The following is a 169-amino-acid chain: MAGAELGAALEQRLGALAIHTEVVEHPEVFTVEEMMPHIQHLKGAHSKNLFLKDKKKKNYWLVTVLHDRQINLNELAKQLGVGSGNLRFADETAMLEKLKVGQGCATPLALFCDGGDVKFVLDSAFLEGGHEKVYFHPMTNAATMGLSPEDFLTFVKMTGHDPIILNFD.

The protein belongs to the PRORSD1 family.

The polypeptide is Putative prolyl-tRNA synthetase associated domain-containing protein 1 (PRORSD1P) (Homo sapiens (Human)).